Here is a 239-residue protein sequence, read N- to C-terminus: Ribosomal RNA small subunit methyltransferase G (239 aa).

S-adenosyl-L-methionine contacts are provided by residues Gly-79, Phe-84, 130 to 131 (AE), and Arg-149.

The protein belongs to the methyltransferase superfamily. RNA methyltransferase RsmG family.

It localises to the cytoplasm. In terms of biological role, specifically methylates the N7 position of a guanine in 16S rRNA. This chain is Ribosomal RNA small subunit methyltransferase G, found in Lactobacillus delbrueckii subsp. bulgaricus (strain ATCC BAA-365 / Lb-18).